Reading from the N-terminus, the 195-residue chain is UPF0314 protein RHECIAT_CH0004233 (195 aa).

A run of 4 helical transmembrane segments spans residues 15-35 (FWFV…YLMG), 64-84 (WYTP…YLIL), 127-147 (GDSI…FFFA), and 150-170 (APVA…GYVI).

The protein belongs to the UPF0314 family.

The protein localises to the cell membrane. This is UPF0314 protein RHECIAT_CH0004233 from Rhizobium etli (strain CIAT 652).